The following is a 354-amino-acid chain: S-adenosylmethionine:tRNA ribosyltransferase-isomerase (354 aa).

The protein belongs to the QueA family. In terms of assembly, monomer.

It localises to the cytoplasm. It carries out the reaction 7-aminomethyl-7-carbaguanosine(34) in tRNA + S-adenosyl-L-methionine = epoxyqueuosine(34) in tRNA + adenine + L-methionine + 2 H(+). The protein operates within tRNA modification; tRNA-queuosine biosynthesis. Its function is as follows. Transfers and isomerizes the ribose moiety from AdoMet to the 7-aminomethyl group of 7-deazaguanine (preQ1-tRNA) to give epoxyqueuosine (oQ-tRNA). The sequence is that of S-adenosylmethionine:tRNA ribosyltransferase-isomerase from Azorhizobium caulinodans (strain ATCC 43989 / DSM 5975 / JCM 20966 / LMG 6465 / NBRC 14845 / NCIMB 13405 / ORS 571).